We begin with the raw amino-acid sequence, 383 residues long: Inactive serine protease 54 (383 aa).

Positions 1–20 (MAEMRGMLLMLLYISHSSSA) are cleaved as a signal peptide. The 238-residue stretch at 21–258 (ICGIQKATIA…YSDWITAKTR (238 aa)) folds into the Peptidase S1 domain. N-linked (GlcNAc...) asparagine glycosylation is present at Asn113. 3 disulfide bridges follow: Cys154-Cys216, Cys185-Cys195, and Cys206-Cys237. The tract at residues 305-334 (QGQRMSTKSNKQKDAGQNFRVNRQPETSGP) is disordered. Residues 323–334 (FRVNRQPETSGP) show a composition bias toward polar residues.

It belongs to the peptidase S1 family. Plasma kallikrein subfamily.

Its subcellular location is the secreted. The sequence is that of Inactive serine protease 54 (Prss54) from Mus musculus (Mouse).